We begin with the raw amino-acid sequence, 436 residues long: Methylenetetrahydrofolate--tRNA-(uracil-5-)-methyltransferase TrmFO (436 aa).

8–13 (GGGLAG) contributes to the FAD binding site.

It belongs to the MnmG family. TrmFO subfamily. It depends on FAD as a cofactor.

It localises to the cytoplasm. It carries out the reaction uridine(54) in tRNA + (6R)-5,10-methylene-5,6,7,8-tetrahydrofolate + NADH + H(+) = 5-methyluridine(54) in tRNA + (6S)-5,6,7,8-tetrahydrofolate + NAD(+). The catalysed reaction is uridine(54) in tRNA + (6R)-5,10-methylene-5,6,7,8-tetrahydrofolate + NADPH + H(+) = 5-methyluridine(54) in tRNA + (6S)-5,6,7,8-tetrahydrofolate + NADP(+). Catalyzes the folate-dependent formation of 5-methyl-uridine at position 54 (M-5-U54) in all tRNAs. This chain is Methylenetetrahydrofolate--tRNA-(uracil-5-)-methyltransferase TrmFO, found in Syntrophomonas wolfei subsp. wolfei (strain DSM 2245B / Goettingen).